We begin with the raw amino-acid sequence, 639 residues long: Threonine--tRNA ligase (639 aa).

Residues 1–61 (MIKVALKDGS…DTDCDLNLFK (61 aa)) enclose the TGS domain. A catalytic region spans residues 242–532 (DHRKLGKELG…LIEHYAGKFP (291 aa)). Residues C333, H384, and H509 each contribute to the Zn(2+) site.

Belongs to the class-II aminoacyl-tRNA synthetase family. In terms of assembly, homodimer. The cofactor is Zn(2+).

The protein resides in the cytoplasm. The enzyme catalyses tRNA(Thr) + L-threonine + ATP = L-threonyl-tRNA(Thr) + AMP + diphosphate + H(+). In terms of biological role, catalyzes the attachment of threonine to tRNA(Thr) in a two-step reaction: L-threonine is first activated by ATP to form Thr-AMP and then transferred to the acceptor end of tRNA(Thr). Also edits incorrectly charged L-seryl-tRNA(Thr). This is Threonine--tRNA ligase from Clostridioides difficile (strain 630) (Peptoclostridium difficile).